Consider the following 88-residue polypeptide: SVENSRPTGQQLESLDLSAPWEQSLPCTERKPSATARLSRRGASLSSPAESSGSPQRRGLSAPSSRQIPAPQGAVLVQREKDLPNYNW.

The span at 1–13 (SVENSRPTGQQLE) shows a compositional bias: polar residues. Residues 1–88 (SVENSRPTGQ…REKDLPNYNW (88 aa)) form a disordered region. Residues 33-55 (SATARLSRRGASLSSPAESSGSP) are compositionally biased toward low complexity. The segment covering 78-88 (QREKDLPNYNW) has biased composition (basic and acidic residues). Phosphotyrosine is present on Y86.

The protein belongs to the KISS1 family. In the hypothalamus, expression increases with puberty in both male and female monkeys. Robust expression in the region of the arcuate nucleus (ARC).

It is found in the secreted. Metastasis suppressor protein. May regulate events downstream of cell-matrix adhesion, perhaps involving cytoskeletal reorganization. Generates a C-terminally amidated peptide, metastin which functions as the endogenous ligand of the G-protein coupled receptor GPR54. The receptor is essential for normal gonadotropin-released hormone physiology and for puberty. The hypothalamic KiSS1/GPR54 system is a pivotal factor in central regulation of the gonadotropic axis at puberty and in adulthood. The chain is Metastasis-suppressor KiSS-1 (KISS1) from Macaca mulatta (Rhesus macaque).